The chain runs to 920 residues: MEEYKDTLNLNTTTFSMKGNLSVNEPKTYAKWQEQQAFKRMQARKDNHGDFTLHDGPPYANGHLHLGHALNKILKDIVVKREYFKGKKIYYTPGWDCHGLPIEQQILERLEKEKTSLENPTLFREKCRDHAKKFLEIQKNEFLQLGVLGDFEDPYKTMDFKFEASIYRALVEVAKKGLLKERHKPIYWSYACESALAEAEVEYKMKKSPSIFVAFGLKKESLEKLKVKKASLVIWTTTPWTLYANVAIALKKDAVYALTQKGYLVAKALHEKLAALGVVDNEITHEFNSNDLEYLVATNPLNQRDSLVALGEHVGLEDGTGAVHTAPGHGEEDYYLGLRYNLEVLMSVDEKGCYDEGIIHNQLLDESYLGEHVFKAQKRIIEQLGDSLLLEQEIEHSYPHCWRTHKPVIYRATTQWFILMDEPFIQNDGSQKTLREVALDAIEKVEFVPSSGKNRLKTMIENRPDWCLSRQRKWGVPLAFFIDKRTNKPCFESEVLEHVANLFEKKGCDVWWEYSVKDLLPPSYQEDAKHYEKIMHILDVWFDSGSTFKAVLEDYHGEKGQSPSDVILEGSDQHRGWFQSSLLIGCVLNNQAPFKKVITHGFIVDEKGEKMSKSKGNVVSLDKLLKTHGSDVVRLWVAFNDYQNDLRVSQTFFTQTEQHYKKFRNTLKFLLANFSDMDLKNLERPHNFSPLDHFMLETLETISAGVNSAFEEHDFVKGLNILMAFVTNELSGIYLDACKDSLYCDSKNNEKRQAIQMVLLATASKLCYFLAPILTHTIEEVLEHSQALRIFLQAKDVFDLKDISVSEKLHLKEFKKPENFEAVLALRSAFNEELDRLKKEGVIKNSLECAIEVKEKALDENLVEELLMVSFVGIAKEKLSETPAFTLFKAPFYKCPRCWRFKSELENTPCKRCEQVLKER.

Positions 58–68 match the 'HIGH' region motif; sequence PYANGHLHLGH. E569 serves as a coordination point for L-isoleucyl-5'-AMP. The 'KMSKS' region signature appears at 610–614; that stretch reads KMSKS. K613 lines the ATP pocket. Zn(2+)-binding residues include C895, C898, C910, and C913.

Belongs to the class-I aminoacyl-tRNA synthetase family. IleS type 1 subfamily. In terms of assembly, monomer. Zn(2+) is required as a cofactor.

The protein localises to the cytoplasm. The catalysed reaction is tRNA(Ile) + L-isoleucine + ATP = L-isoleucyl-tRNA(Ile) + AMP + diphosphate. Its function is as follows. Catalyzes the attachment of isoleucine to tRNA(Ile). As IleRS can inadvertently accommodate and process structurally similar amino acids such as valine, to avoid such errors it has two additional distinct tRNA(Ile)-dependent editing activities. One activity is designated as 'pretransfer' editing and involves the hydrolysis of activated Val-AMP. The other activity is designated 'posttransfer' editing and involves deacylation of mischarged Val-tRNA(Ile). This is Isoleucine--tRNA ligase from Helicobacter pylori (strain ATCC 700392 / 26695) (Campylobacter pylori).